The following is a 1422-amino-acid chain: YEATS domain-containing protein 2 (1422 aa).

Lys-9 is covalently cross-linked (Glycyl lysine isopeptide (Lys-Gly) (interchain with G-Cter in SUMO2)). Residues 47 to 80 are a coiled coil; that stretch reads KEQFALEMKNKEHEIEVIDQRLIEARRMMDKLRA. Residue Lys-113 forms a Glycyl lysine isopeptide (Lys-Gly) (interchain with G-Cter in SUMO2) linkage. Residues 117–198 are disordered; sequence ESPSRSSSPA…KTEQRNADLT (82 aa). Residues Ser-118, Ser-120, and Ser-157 each carry the phosphoserine modification. Polar residues predominate over residues 119 to 148; it reads PSRSSSPANQRAETPSANHSESDSLSQHND. Residues 149 to 165 show a composition bias toward basic and acidic residues; sequence FLSDKDNNSNMDIEERL. Polar residues predominate over residues 166-176; the sequence is SNNMEQRPSRN. The segment covering 177 to 198 has biased composition (basic and acidic residues); the sequence is TGRDTSRITGSHKTEQRNADLT. Residue Lys-189 forms a Glycyl lysine isopeptide (Lys-Gly) (interchain with G-Cter in SUMO2) linkage. One can recognise a YEATS domain in the interval 200 to 345; sequence ETSRLFVKKT…EDCIYPQSSE (146 aa). Histone H3K27cr binding stretches follow at residues 259–261 and 282–284; these read HPS and WGE. Lys-370 is covalently cross-linked (Glycyl lysine isopeptide (Lys-Gly) (interchain with G-Cter in SUMO2)). Thr-407 is subject to Phosphothreonine. Phosphoserine occurs at positions 447, 463, 465, 471, and 473. The disordered stretch occupies residues 465-486; the sequence is SPISTPSPSPLPRTPTSTPVHV. At Thr-478 the chain carries Phosphothreonine. Lys-487 participates in a covalent cross-link: Glycyl lysine isopeptide (Lys-Gly) (interchain with G-Cter in SUMO2). Over residues 513-535 the composition is skewed to polar residues; that stretch reads TTPSTGSPTNKISTASQVSQGTG. The disordered stretch occupies residues 513–540; sequence TTPSTGSPTNKISTASQVSQGTGSPVPK. Residue Ser-536 is modified to Phosphoserine. Lys-552 participates in a covalent cross-link: Glycyl lysine isopeptide (Lys-Gly) (interchain with G-Cter in SUMO2). Ser-575 is modified (phosphoserine). Lys-592 is covalently cross-linked (Glycyl lysine isopeptide (Lys-Gly) (interchain with G-Cter in SUMO2)). A Phosphoserine modification is found at Ser-627. Residues Lys-649 and Lys-773 each participate in a glycyl lysine isopeptide (Lys-Gly) (interchain with G-Cter in SUMO2) cross-link. Residues 794 to 842 are disordered; that stretch reads GSAASGGSGAGGGGGGGGGGGSGSGGGGSTGGGGGTAGGGTQSTAGPGG. Over residues 797–842 the composition is skewed to gly residues; it reads ASGGSGAGGGGGGGGGGGSGSGGGGSTGGGGGTAGGGTQSTAGPGG. A Glycyl lysine isopeptide (Lys-Gly) (interchain with G-Cter in SUMO2) cross-link involves residue Lys-923. Lys-1110 is covalently cross-linked (Glycyl lysine isopeptide (Lys-Gly) (interchain with G-Cter in SUMO1); alternate). Residue Lys-1110 forms a Glycyl lysine isopeptide (Lys-Gly) (interchain with G-Cter in SUMO2); alternate linkage. A Glycyl lysine isopeptide (Lys-Gly) (interchain with G-Cter in SUMO2) cross-link involves residue Lys-1130. At Thr-1219 the chain carries Phosphothreonine. Glycyl lysine isopeptide (Lys-Gly) (interchain with G-Cter in SUMO2) cross-links involve residues Lys-1222 and Lys-1285.

As to quaternary structure, component of the ADA2A-containing complex (ATAC), composed of KAT14, KAT2A, TADA2L, TADA3L, ZZ3, MBIP, WDR5, YEATS2, SGF29 and DR1.

Its subcellular location is the nucleus. Its function is as follows. Chromatin reader component of the ATAC complex, a complex with histone acetyltransferase activity on histones H3 and H4. YEATS2 specifically recognizes and binds histone H3 crotonylated at 'Lys-27' (H3K27cr). Crotonylation marks active promoters and enhancers and confers resistance to transcriptional repressors. The protein is YEATS domain-containing protein 2 of Homo sapiens (Human).